A 64-amino-acid chain; its full sequence is Disintegrin VB7B (64 aa).

One can recognise a Disintegrin domain in the interval 1-64 (ELLQNSGNPC…TGISSDCPRN (64 aa)). 4 disulfides stabilise this stretch: C10–C33, C24–C30, C29–C54, and C42–C61. Residues 46 to 48 (KGD) carry the Cell attachment site; atypical (KGD) motif.

Belongs to the venom metalloproteinase (M12B) family. P-II subfamily. P-IIe sub-subfamily. Heterodimer with VB7A; disulfide-linked. As to expression, expressed by the venom gland.

The protein resides in the secreted. In terms of biological role, poor inhibitor of platelet aggregation. The disintegrin inhibits the adhesion of cells expressing the RGD-dependent integrin alpha-5/beta-1 (ITGA5/ITGB1) to immobilized fibronectin. Inhibition on alpha-IIb/beta-3 (ITGA2B/ITGB3) is low. This chain is Disintegrin VB7B, found in Vipera berus berus (Common viper).